A 68-amino-acid chain; its full sequence is Protein transport protein Sec61 gamma-1 subunit (68 aa).

Residues 1-32 lie on the Cytoplasmic side of the membrane; the sequence is MDKVVKFAEPGRAFAKDSIRLVKRCTKPDRKE. Residues 33-61 form a helical membrane-spanning segment; the sequence is FQKIAIATAVGFAIMGFIGFFVKLIHIPI. The Extracellular segment spans residues 62-68; sequence NNIIVGS.

It belongs to the SecE/SEC61-gamma family. In terms of assembly, heterotrimeric complex composed of SEC61-alpha, SEC61-beta and SEC61-gamma.

It is found in the endoplasmic reticulum membrane. Functionally, necessary for protein translocation in the endoplasmic reticulum. The chain is Protein transport protein Sec61 gamma-1 subunit (SEC61G1) from Drosophila melanogaster (Fruit fly).